The sequence spans 316 residues: Transaldolase (316 aa).

Lysine 131 (schiff-base intermediate with substrate) is an active-site residue.

It belongs to the transaldolase family. Type 1 subfamily. In terms of assembly, homodimer.

It is found in the cytoplasm. The enzyme catalyses D-sedoheptulose 7-phosphate + D-glyceraldehyde 3-phosphate = D-erythrose 4-phosphate + beta-D-fructose 6-phosphate. The protein operates within carbohydrate degradation; pentose phosphate pathway; D-glyceraldehyde 3-phosphate and beta-D-fructose 6-phosphate from D-ribose 5-phosphate and D-xylulose 5-phosphate (non-oxidative stage): step 2/3. In terms of biological role, transaldolase is important for the balance of metabolites in the pentose-phosphate pathway. In Chromohalobacter salexigens (strain ATCC BAA-138 / DSM 3043 / CIP 106854 / NCIMB 13768 / 1H11), this protein is Transaldolase.